A 360-amino-acid chain; its full sequence is UPF0324 membrane protein DVU_0123 (360 aa).

The next 10 membrane-spanning stretches (helical) occupy residues 20 to 42, 57 to 79, 100 to 122, 142 to 164, 171 to 193, 203 to 225, 232 to 254, 278 to 297, 310 to 327, and 337 to 359; these read VTES…FVAP, KDFI…PAVF, SYSL…VFLF, AACL…APAV, MAYS…PLIG, FGAF…FGFS, AGIY…AIMA, FPLF…AGVL, EWAF…TRLS, and FLFG…LLFM.

This sequence belongs to the UPF0324 family.

The protein resides in the cell membrane. The protein is UPF0324 membrane protein DVU_0123 of Nitratidesulfovibrio vulgaris (strain ATCC 29579 / DSM 644 / CCUG 34227 / NCIMB 8303 / VKM B-1760 / Hildenborough) (Desulfovibrio vulgaris).